A 165-amino-acid polypeptide reads, in one-letter code: Glucosamine 6-phosphate N-acetyltransferase (165 aa).

In terms of domain architecture, N-acetyltransferase spans 22 to 165 (FKVRPLAKDD…DDCNFMTQRF (144 aa)). Substrate is bound by residues Thr44, 92-95 (KFIH), and 104-106 (EDV). 114 to 119 (RQKLGA) is a binding site for acetyl-CoA. Residues 135 to 136 (YK) and Arg164 each bind substrate.

The protein belongs to the acetyltransferase family. GNA1 subfamily.

The catalysed reaction is D-glucosamine 6-phosphate + acetyl-CoA = N-acetyl-D-glucosamine 6-phosphate + CoA + H(+). The protein operates within nucleotide-sugar biosynthesis; UDP-N-acetyl-alpha-D-glucosamine biosynthesis; N-acetyl-alpha-D-glucosamine 1-phosphate from alpha-D-glucosamine 6-phosphate (route I): step 1/2. The chain is Glucosamine 6-phosphate N-acetyltransferase (gna-1) from Caenorhabditis elegans.